Here is a 79-residue protein sequence, read N- to C-terminus: MFVKTGDKVKVIAGSEKGKEGTVLSVNVKENRVVVKGVNMIKKATKASASNANGGVVETEGSIHASNVKVIAKAESNKD.

Belongs to the universal ribosomal protein uL24 family. Part of the 50S ribosomal subunit.

Its function is as follows. One of two assembly initiator proteins, it binds directly to the 5'-end of the 23S rRNA, where it nucleates assembly of the 50S subunit. In terms of biological role, one of the proteins that surrounds the polypeptide exit tunnel on the outside of the subunit. This chain is Large ribosomal subunit protein uL24, found in Lactobacillus delbrueckii subsp. bulgaricus (strain ATCC 11842 / DSM 20081 / BCRC 10696 / JCM 1002 / NBRC 13953 / NCIMB 11778 / NCTC 12712 / WDCM 00102 / Lb 14).